The primary structure comprises 771 residues: Tetratricopeptide repeat-containing protein trd-1 (771 aa).

6 TPR repeats span residues 389-415 (LEMW…IRRL), 416-449 (IEQK…SDDR), 451-484 (ARAH…QPIQ), 485-518 (LGTW…QPDH), 520-552 (EAWN…NYEH), and 553-586 (PNVW…NKRG).

Belongs to the TTC27 family. Expressed in the spermatheca.

The protein localises to the cytoplasm. Functionally, developmental protein required for cell fate determination in both the germline and seam cells of the developing epidermis. Specifically, involved in sex determination and may function in parallel or downstream of other sex determination factors, including tra-2 and fem-3, to promote oogenesis in its role in the regulation of the switch from spermatogenesis to oogenesis in the gonads. Also implicated in the mitosis to meiosis switch in distal tip cells. The polypeptide is Tetratricopeptide repeat-containing protein trd-1 (Caenorhabditis elegans).